Consider the following 266-residue polypeptide: Glucosamine-6-phosphate deaminase 1 (266 aa).

Asp-67 functions as the Proton acceptor; for enolization step in the catalytic mechanism. Asn-136 (for ring-opening step) is an active-site residue. The Proton acceptor; for ring-opening step role is filled by His-138. The active-site For ring-opening step is the Glu-143.

This sequence belongs to the glucosamine/galactosamine-6-phosphate isomerase family. Homohexamer.

The protein localises to the cytoplasm. It catalyses the reaction alpha-D-glucosamine 6-phosphate + H2O = beta-D-fructose 6-phosphate + NH4(+). In terms of biological role, catalyzes the reversible conversion of alpha-D-glucosamine 6-phosphate (GlcN-6P) into beta-D-fructose 6-phosphate (Fru-6P) and ammonium ion, a regulatory reaction step in de novo uridine diphosphate-N-acetyl-alpha-D-glucosamine (UDP-GlcNAc) biosynthesis via hexosamine pathway. In Giardia intestinalis (Giardia lamblia), this protein is Glucosamine-6-phosphate deaminase 1 (GPI1).